Here is a 115-residue protein sequence, read N- to C-terminus: UPF0102 protein Kole_1919 (115 aa).

This sequence belongs to the UPF0102 family.

In Kosmotoga olearia (strain ATCC BAA-1733 / DSM 21960 / TBF 19.5.1), this protein is UPF0102 protein Kole_1919.